The following is a 387-amino-acid chain: Glutamyl-tRNA reductase 1 (387 aa).

Residues 45–48 (TCNR), Ser96, 101–103 (ETD), and Gln107 each bind substrate. Cys46 (nucleophile) is an active-site residue. Residue 175–180 (GAGSVG) participates in NADP(+) binding.

The protein belongs to the glutamyl-tRNA reductase family. As to quaternary structure, homodimer.

The enzyme catalyses (S)-4-amino-5-oxopentanoate + tRNA(Glu) + NADP(+) = L-glutamyl-tRNA(Glu) + NADPH + H(+). It functions in the pathway porphyrin-containing compound metabolism; protoporphyrin-IX biosynthesis; 5-aminolevulinate from L-glutamyl-tRNA(Glu): step 1/2. Its function is as follows. Catalyzes the NADPH-dependent reduction of glutamyl-tRNA(Glu) to glutamate 1-semialdehyde (GSA). This is Glutamyl-tRNA reductase 1 from Pyrobaculum arsenaticum (strain DSM 13514 / JCM 11321 / PZ6).